The sequence spans 63 residues: Large ribosomal subunit protein bL28 (63 aa).

The protein belongs to the bacterial ribosomal protein bL28 family.

In Symbiobacterium thermophilum (strain DSM 24528 / JCM 14929 / IAM 14863 / T), this protein is Large ribosomal subunit protein bL28.